The following is a 37-amino-acid chain: Large ribosomal subunit protein bL36 (37 aa).

This sequence belongs to the bacterial ribosomal protein bL36 family.

This Pelotomaculum thermopropionicum (strain DSM 13744 / JCM 10971 / SI) protein is Large ribosomal subunit protein bL36.